The chain runs to 344 residues: Ion-translocating oxidoreductase complex subunit D (344 aa).

The next 4 helical transmembrane spans lie at 23-43 (LVLG…GPGT), 44-64 (LLNL…MLAL), 77-99 (SALV…WLTL), and 120-140 (PFNP…LEMT). Position 172 is an FMN phosphoryl threonine (Thr-172). Transmembrane regions (helical) follow at residues 198–218 (LGSA…LFLL), 222–242 (LFTW…SLLF), 252–272 (GSPL…FIVT), 285–305 (LVFG…GGYP), and 306–326 (DGMA…DYYT).

Belongs to the NqrB/RnfD family. The complex is composed of six subunits: RnfA, RnfB, RnfC, RnfD, RnfE and RnfG. It depends on FMN as a cofactor.

It localises to the cell inner membrane. In terms of biological role, part of a membrane-bound complex that couples electron transfer with translocation of ions across the membrane. The polypeptide is Ion-translocating oxidoreductase complex subunit D (Pseudomonas aeruginosa (strain LESB58)).